A 320-amino-acid polypeptide reads, in one-letter code: MGSSSKEETASDGDTASGGASPSNDGRLFSEGERVLAYHGPRVYGAKVQKVELRKKEWKYFVHYLGWNKNWDEWVSADRLLKHTEENLVKQKALDKKQGVEKGTKSGRSAQTKTRSSADTKADKDDTKTNAAKGKKRKHESGNEKDNVTAEKLMKIQIPASLKKQLTDDWEYIAQKDKVVKLPRSPNVDEILSKYLEFKTKKDGMVTDSVAEILKGIRSYFDKALPVMLLYKKERRQYQESIVDDTSPSTVYGAEHLLRLFVKLPDLFSYVNMEEETWSRMQQTLSDFLKFIQKNQSTFLLPSAYDSDKVSDGKGKGKDD.

The segment at 1 to 28 (MGSSSKEETASDGDTASGGASPSNDGRL) is disordered. Over residues 12–24 (DGDTASGGASPSN) the composition is skewed to polar residues. One can recognise a Tudor-knot domain in the interval 30 to 80 (SEGERVLAYHGPRVYGAKVQKVELRKKEWKYFVHYLGWNKNWDEWVSADRL). Positions 93–104 (ALDKKQGVEKGT) are enriched in basic and acidic residues. A disordered region spans residues 93–147 (ALDKKQGVEKGTKSGRSAQTKTRSSADTKADKDDTKTNAAKGKKRKHESGNEKDN). Over residues 106–115 (SGRSAQTKTR) the composition is skewed to polar residues. Basic and acidic residues predominate over residues 116–128 (SSADTKADKDDTK). The region spanning 150-318 (AEKLMKIQIP…KVSDGKGKGK (169 aa)) is the MRG domain.

As to quaternary structure, interacts with HAM1 and HAM2. Interacts (via MRG domain) with CO. Component of the NuA4 histone acetyltransferase complex. In terms of tissue distribution, ubiquitous. Mainly expressed in the vasculature of cotyledons and leaves, and in roots and inflorescences.

Its subcellular location is the nucleus. In terms of biological role, chromatin remodeling factor. Acts as a 'reader' protein by binding to H3K36me3 and H3K36me3 to control histone H4 acetylation. Increases the transcriptional levels of the flowering time genes FLC and FT. Binds the chromatin at the FT promoter upon interaction with CO. The polypeptide is Protein MRG1 (Arabidopsis thaliana (Mouse-ear cress)).